The chain runs to 494 residues: Aspartyl/glutamyl-tRNA(Asn/Gln) amidotransferase subunit B (494 aa).

The protein belongs to the GatB/GatE family. GatB subfamily. In terms of assembly, heterotrimer of A, B and C subunits.

It carries out the reaction L-glutamyl-tRNA(Gln) + L-glutamine + ATP + H2O = L-glutaminyl-tRNA(Gln) + L-glutamate + ADP + phosphate + H(+). The enzyme catalyses L-aspartyl-tRNA(Asn) + L-glutamine + ATP + H2O = L-asparaginyl-tRNA(Asn) + L-glutamate + ADP + phosphate + 2 H(+). Functionally, allows the formation of correctly charged Asn-tRNA(Asn) or Gln-tRNA(Gln) through the transamidation of misacylated Asp-tRNA(Asn) or Glu-tRNA(Gln) in organisms which lack either or both of asparaginyl-tRNA or glutaminyl-tRNA synthetases. The reaction takes place in the presence of glutamine and ATP through an activated phospho-Asp-tRNA(Asn) or phospho-Glu-tRNA(Gln). The chain is Aspartyl/glutamyl-tRNA(Asn/Gln) amidotransferase subunit B from Protochlamydia amoebophila (strain UWE25).